Here is a 479-residue protein sequence, read N- to C-terminus: Aspartyl/glutamyl-tRNA(Asn/Gln) amidotransferase subunit B (479 aa).

It belongs to the GatB/GatE family. GatB subfamily. In terms of assembly, heterotrimer of A, B and C subunits.

It catalyses the reaction L-glutamyl-tRNA(Gln) + L-glutamine + ATP + H2O = L-glutaminyl-tRNA(Gln) + L-glutamate + ADP + phosphate + H(+). The catalysed reaction is L-aspartyl-tRNA(Asn) + L-glutamine + ATP + H2O = L-asparaginyl-tRNA(Asn) + L-glutamate + ADP + phosphate + 2 H(+). Functionally, allows the formation of correctly charged Asn-tRNA(Asn) or Gln-tRNA(Gln) through the transamidation of misacylated Asp-tRNA(Asn) or Glu-tRNA(Gln) in organisms which lack either or both of asparaginyl-tRNA or glutaminyl-tRNA synthetases. The reaction takes place in the presence of glutamine and ATP through an activated phospho-Asp-tRNA(Asn) or phospho-Glu-tRNA(Gln). The polypeptide is Aspartyl/glutamyl-tRNA(Asn/Gln) amidotransferase subunit B (Streptococcus pyogenes serotype M28 (strain MGAS6180)).